The following is a 364-amino-acid chain: S-adenosylmethionine:tRNA ribosyltransferase-isomerase (364 aa).

It belongs to the QueA family. In terms of assembly, monomer.

Its subcellular location is the cytoplasm. It carries out the reaction 7-aminomethyl-7-carbaguanosine(34) in tRNA + S-adenosyl-L-methionine = epoxyqueuosine(34) in tRNA + adenine + L-methionine + 2 H(+). It functions in the pathway tRNA modification; tRNA-queuosine biosynthesis. Functionally, transfers and isomerizes the ribose moiety from AdoMet to the 7-aminomethyl group of 7-deazaguanine (preQ1-tRNA) to give epoxyqueuosine (oQ-tRNA). In Bradyrhizobium sp. (strain ORS 278), this protein is S-adenosylmethionine:tRNA ribosyltransferase-isomerase.